The chain runs to 447 residues: Probable glycine dehydrogenase (decarboxylating) subunit 1 (447 aa).

It belongs to the GcvP family. N-terminal subunit subfamily. In terms of assembly, the glycine cleavage system is composed of four proteins: P, T, L and H. In this organism, the P 'protein' is a heterodimer of two subunits.

The enzyme catalyses N(6)-[(R)-lipoyl]-L-lysyl-[glycine-cleavage complex H protein] + glycine + H(+) = N(6)-[(R)-S(8)-aminomethyldihydrolipoyl]-L-lysyl-[glycine-cleavage complex H protein] + CO2. Functionally, the glycine cleavage system catalyzes the degradation of glycine. The P protein binds the alpha-amino group of glycine through its pyridoxal phosphate cofactor; CO(2) is released and the remaining methylamine moiety is then transferred to the lipoamide cofactor of the H protein. In Bacillus cereus (strain AH187), this protein is Probable glycine dehydrogenase (decarboxylating) subunit 1.